Here is a 479-residue protein sequence, read N- to C-terminus: Flotillin-like protein 3 (479 aa).

Residue Cys-36 is the site of S-palmitoyl cysteine attachment. 2 coiled-coil regions span residues 227–251 (KVKTEVKVFQNEKEALVAKADAALA) and 306–326 (EYETKVQEANWELYNKQKQAE).

It belongs to the band 7/mec-2 family. Flotillin subfamily. Post-translationally, may be palmitoylated.

It is found in the cell membrane. The protein resides in the membrane. It localises to the caveola. In terms of biological role, may act as a scaffolding protein within caveolar membranes, functionally participating in formation of caveolae or caveolae-like vesicles. The polypeptide is Flotillin-like protein 3 (FLOT3) (Arabidopsis thaliana (Mouse-ear cress)).